A 358-amino-acid polypeptide reads, in one-letter code: Ribosomal RNA large subunit methyltransferase M (358 aa).

S-adenosyl-L-methionine is bound by residues serine 187, cysteine 220–glycine 223, aspartate 239, aspartate 259, and aspartate 276. The active-site Proton acceptor is the lysine 305.

This sequence belongs to the class I-like SAM-binding methyltransferase superfamily. RNA methyltransferase RlmE family. RlmM subfamily. Monomer.

The protein localises to the cytoplasm. It carries out the reaction cytidine(2498) in 23S rRNA + S-adenosyl-L-methionine = 2'-O-methylcytidine(2498) in 23S rRNA + S-adenosyl-L-homocysteine + H(+). Catalyzes the 2'-O-methylation at nucleotide C2498 in 23S rRNA. The polypeptide is Ribosomal RNA large subunit methyltransferase M (Shewanella woodyi (strain ATCC 51908 / MS32)).